Consider the following 170-residue polypeptide: Large ribosomal subunit protein uL11 (170 aa).

It belongs to the universal ribosomal protein uL11 family. As to quaternary structure, part of the ribosomal stalk of the 50S ribosomal subunit. Interacts with L10 and the large rRNA to form the base of the stalk. L10 forms an elongated spine to which L12 dimers bind in a sequential fashion forming a multimeric L10(L12)X complex.

Its function is as follows. Forms part of the ribosomal stalk which helps the ribosome interact with GTP-bound translation factors. The protein is Large ribosomal subunit protein uL11 of Saccharolobus islandicus (strain M.14.25 / Kamchatka #1) (Sulfolobus islandicus).